The sequence spans 322 residues: Ribonuclease Z (322 aa).

Residues His62, His64, Asp66, His67, His143, Asp215, and His273 each coordinate Zn(2+). The Proton acceptor role is filled by Asp66. Over residues 300–314 (ELRRYELDPREKEPD) the composition is skewed to basic and acidic residues. The interval 300 to 322 (ELRRYELDPREKEPDPVGPADES) is disordered.

It belongs to the RNase Z family. In terms of assembly, homodimer. The cofactor is Zn(2+).

It catalyses the reaction Endonucleolytic cleavage of RNA, removing extra 3' nucleotides from tRNA precursor, generating 3' termini of tRNAs. A 3'-hydroxy group is left at the tRNA terminus and a 5'-phosphoryl group is left at the trailer molecule.. Functionally, zinc phosphodiesterase, which displays some tRNA 3'-processing endonuclease activity. Probably involved in tRNA maturation, by removing a 3'-trailer from precursor tRNA. In Salinibacter ruber (strain DSM 13855 / M31), this protein is Ribonuclease Z.